A 260-amino-acid polypeptide reads, in one-letter code: OCIA domain-containing protein 1 (260 aa).

An OCIA domain is found at 1 to 110; that stretch reads MDSPLSDGSR…MRLPNSRLGE (110 aa). The interval 146-260 is disordered; the sequence is DVYTDEGLNP…KNKYGDSWQD (115 aa). The span at 155–164 shows a compositional bias: polar residues; sequence PSRSTALNLD. Basic and acidic residues predominate over residues 205–215; it reads EDLRKKNREGY.

The protein belongs to the OCIAD1 family.

This chain is OCIA domain-containing protein 1, found in Drosophila pseudoobscura pseudoobscura (Fruit fly).